A 236-amino-acid chain; its full sequence is Purine nucleoside phosphorylase DeoD-type (236 aa).

Residue His4 coordinates a purine D-ribonucleoside. Phosphate-binding positions include Gly20, Arg24, Arg43, and 87-90 (RVGT). Residues 178–180 (EME) and 202–203 (SD) each bind a purine D-ribonucleoside. The Proton donor role is filled by Asp203.

Belongs to the PNP/UDP phosphorylase family. In terms of assembly, homohexamer; trimer of homodimers.

The enzyme catalyses a purine D-ribonucleoside + phosphate = a purine nucleobase + alpha-D-ribose 1-phosphate. It carries out the reaction a purine 2'-deoxy-D-ribonucleoside + phosphate = a purine nucleobase + 2-deoxy-alpha-D-ribose 1-phosphate. Its function is as follows. Catalyzes the reversible phosphorolytic breakdown of the N-glycosidic bond in the beta-(deoxy)ribonucleoside molecules, with the formation of the corresponding free purine bases and pentose-1-phosphate. This is Purine nucleoside phosphorylase DeoD-type from Geobacillus kaustophilus (strain HTA426).